The primary structure comprises 479 residues: GTPase Obg (479 aa).

The Obg domain occupies 2 to 159 (PRFVDRVVIH…RDLTLELKTV (158 aa)). The OBG-type G domain maps to 160 to 340 (ADVGLVGFPS…LIFGLWQMVS (181 aa)). Residues 166–173 (GFPSAGKS), 191–195 (FTTLV), 212–215 (DVPG), 292–295 (NKID), and 321–323 (STV) each bind GTP. 2 residues coordinate Mg(2+): serine 173 and threonine 193. The 79-residue stretch at 358 to 436 (PVPVDDSGFD…IGEMTFDWEP (79 aa)) folds into the OCT domain. The segment at 438 to 479 (TPAGGHVAMSGRGTDVRLERSDRVGAAERKAARRQRRERDDD) is disordered. The segment covering 451–467 (TDVRLERSDRVGAAERK) has biased composition (basic and acidic residues).

This sequence belongs to the TRAFAC class OBG-HflX-like GTPase superfamily. OBG GTPase family. In terms of assembly, monomer. Mg(2+) serves as cofactor.

Its subcellular location is the cytoplasm. Its function is as follows. An essential GTPase which binds GTP, GDP and possibly (p)ppGpp with moderate affinity, with high nucleotide exchange rates and a fairly low GTP hydrolysis rate. Plays a role in control of the cell cycle, stress response, ribosome biogenesis and in those bacteria that undergo differentiation, in morphogenesis control. In Mycobacterium marinum (strain ATCC BAA-535 / M), this protein is GTPase Obg.